Here is a 663-residue protein sequence, read N- to C-terminus: UvrABC system protein B (663 aa).

Residues 26 to 414 enclose the Helicase ATP-binding domain; it reads DGLESGLAKQ…DNVAEQVVRP (389 aa). An ATP-binding site is contributed by 39 to 46; it reads GVTGSGKT. Residues 92–115 carry the Beta-hairpin motif; sequence YYDYYQPEAYVPASDTFIEKDASI. One can recognise a Helicase C-terminal domain in the interval 430–596; sequence QVDDLMSEIR…GINKSVEDIL (167 aa). The region spanning 624 to 659 is the UVR domain; that stretch reads AKQINALEKQMYAHAQNMEFELAAKIRDEYLLLKEQ.

It belongs to the UvrB family. In terms of assembly, forms a heterotetramer with UvrA during the search for lesions. Interacts with UvrC in an incision complex.

It is found in the cytoplasm. In terms of biological role, the UvrABC repair system catalyzes the recognition and processing of DNA lesions. A damage recognition complex composed of 2 UvrA and 2 UvrB subunits scans DNA for abnormalities. Upon binding of the UvrA(2)B(2) complex to a putative damaged site, the DNA wraps around one UvrB monomer. DNA wrap is dependent on ATP binding by UvrB and probably causes local melting of the DNA helix, facilitating insertion of UvrB beta-hairpin between the DNA strands. Then UvrB probes one DNA strand for the presence of a lesion. If a lesion is found the UvrA subunits dissociate and the UvrB-DNA preincision complex is formed. This complex is subsequently bound by UvrC and the second UvrB is released. If no lesion is found, the DNA wraps around the other UvrB subunit that will check the other stand for damage. In Legionella pneumophila (strain Lens), this protein is UvrABC system protein B.